The following is a 914-amino-acid chain: Beta-mannosidase A (914 aa).

A signal peptide spans 1–20; the sequence is MRFTATAAALVASSIPATLG. 7 N-linked (GlcNAc...) asparagine glycosylation sites follow: asparagine 39, asparagine 79, asparagine 230, asparagine 265, asparagine 299, asparagine 309, and asparagine 330. The active-site Proton donor is glutamate 462. 8 N-linked (GlcNAc...) asparagine glycosylation sites follow: asparagine 591, asparagine 614, asparagine 641, asparagine 721, asparagine 744, asparagine 773, asparagine 784, and asparagine 909.

Belongs to the glycosyl hydrolase 2 family. Beta-mannosidase A subfamily. As to quaternary structure, homodimer.

It is found in the secreted. It catalyses the reaction Hydrolysis of terminal, non-reducing beta-D-mannose residues in beta-D-mannosides.. It participates in glycan metabolism; N-glycan degradation. In terms of biological role, exoglycosidase that cleaves the single beta-linked mannose residue from the non-reducing end of beta-mannosidic oligosaccharides of various complexity and length. Involved in the degradation of polymeric mannan and galactomannan. In Aspergillus oryzae (strain ATCC 42149 / RIB 40) (Yellow koji mold), this protein is Beta-mannosidase A (mndA).